Reading from the N-terminus, the 209-residue chain is Protein N-terminal glutamine amidohydrolase (209 aa).

Residues C30, H83, and D99 contribute to the active site.

Belongs to the NTAQ1 family. Monomer. As to expression, widely expressed.

The protein localises to the cytoplasm. The protein resides in the cytosol. Its subcellular location is the nucleus. The enzyme catalyses N-terminal L-glutaminyl-[protein] + H2O = N-terminal L-glutamyl-[protein] + NH4(+). Functionally, mediates the side-chain deamidation of N-terminal glutamine residues to glutamate, an important step in N-end rule pathway of protein degradation. Conversion of the resulting N-terminal glutamine to glutamate renders the protein susceptible to arginylation, polyubiquitination and degradation as specified by the N-end rule. Does not act on substrates with internal or C-terminal glutamine and does not act on non-glutamine residues in any position. Does not deaminate acetylated N-terminal glutamine. With the exception of proline, all tested second-position residues on substrate peptides do not greatly influence the activity. In contrast, a proline at position 2, virtually abolishes deamidation of N-terminal glutamine. The chain is Protein N-terminal glutamine amidohydrolase (Ntaq1) from Mus musculus (Mouse).